Reading from the N-terminus, the 311-residue chain is Protein translocase subunit SecF (311 aa).

The next 6 helical transmembrane spans lie at 23–42 (VSYS…ISIY), 140–160 (IEAG…YIGV), 164–184 (WYFG…ALGF), 194–214 (LSTI…SVVI), 246–266 (ILTV…GGKA), and 272–292 (VLVF…SAPI).

Belongs to the SecD/SecF family. SecF subfamily. In terms of assembly, forms a complex with SecD. Part of the essential Sec protein translocation apparatus which comprises SecA, SecYEG and auxiliary proteins SecDF-YajC and YidC.

It is found in the cell inner membrane. Its function is as follows. Part of the Sec protein translocase complex. Interacts with the SecYEG preprotein conducting channel. SecDF uses the proton motive force (PMF) to complete protein translocation after the ATP-dependent function of SecA. The sequence is that of Protein translocase subunit SecF from Rickettsia prowazekii (strain Madrid E).